Reading from the N-terminus, the 315-residue chain is MRTYSNKLIAIMSVLLLACLIVSGCSSSQNNNGSGKSESKDSRVIHDEEGKTTVSGTPKRVVVLELSFLDAVHNLGITPVGIADDNKKDMIKKLVGSSIDYTSVGTRSEPNLEVISSLKPDLIIADAERHKNIYKQLKKIAPTIELKSREATYDETIDSFTTIAKALNKEDEGKEKLAEHKKVINDLKAELPKDENRNIVLGVARADSFQLHTSSSYDGEIFKMLGFTHAVKSDNAYQEVSLEQLSKIDPDILFISANEGKTIVDEWKTNPLWKNLKAVKNGQVYDADRDTWTRFRGIKSSETSAKDVLKKVYNK.

An N-terminal signal peptide occupies residues 1–18 (MRTYSNKLIAIMSVLLLA). Cys-19 carries the N-palmitoyl cysteine lipid modification. Cys-19 carries the S-diacylglycerol cysteine lipid modification. The span at 27–36 (SSQNNNGSGK) shows a compositional bias: low complexity. Residues 27 to 52 (SSQNNNGSGKSESKDSRVIHDEEGKT) are disordered. Basic and acidic residues predominate over residues 37–51 (SESKDSRVIHDEEGK). The region spanning 60–315 (RVVVLELSFL…KDVLKKVYNK (256 aa)) is the Fe/B12 periplasmic-binding domain.

It belongs to the bacterial solute-binding protein 8 family. In terms of assembly, the complex is composed of one ATP-binding protein (YfmF), two transmembrane proteins (YfmD and YfmE) and a solute-binding protein (YfmC).

Its subcellular location is the cell membrane. Functionally, part of the ABC transporter complex YfmCDEF involved in citrate-dependent Fe(3+) import. Binds citrate-dependent Fe(3+) and delivers it to the surface of YfmDE. The sequence is that of Fe(3+)-citrate-binding protein YfmC (yfmC) from Bacillus subtilis (strain 168).